Consider the following 476-residue polypeptide: Probable isoprenylcysteine alpha-carbonyl methylesterase ICMEL1 (476 aa).

Residues 92–104 (NCLSAFSDDTNGT) show a composition bias toward polar residues. Residues 92–116 (NCLSAFSDDTNGTADGGNNSGDRQT) form a disordered region. Helical transmembrane passes span 153-173 (FMAL…VGYY) and 208-228 (VVAF…GSLL). Substrate contacts are provided by residues 214-216 (GGA) and 285-287 (QSA). Residues Ser286, Asp388, and His420 contribute to the active site.

Belongs to the AB hydrolase superfamily. Isoprenylcysteine methylesterase family. In terms of tissue distribution, expressed in roots, rosette and cauline leaves, stems, flowers and siliques.

The protein localises to the endoplasmic reticulum membrane. The protein resides in the golgi apparatus membrane. The enzyme catalyses [protein]-C-terminal S-[(2E,6E)-farnesyl]-L-cysteine methyl ester + H2O = [protein]-C-terminal S-[(2E,6E)-farnesyl]-L-cysteine + methanol + H(+). Functionally, catalyzes the demethylation of isoprenylcysteine methylesters. May be involved in the regulation of ABA signaling. The chain is Probable isoprenylcysteine alpha-carbonyl methylesterase ICMEL1 from Arabidopsis thaliana (Mouse-ear cress).